Consider the following 117-residue polypeptide: Putative phosphotransferase enzyme IIB component MPN_268 (117 aa).

Residues 1–21 form a helical membrane-spanning segment; sequence MKVLLWIGYVLSFGLLYLYLV. Residues 42 to 117 form the PTS EIIB type-1 domain; sequence PFAVRDFIAA…QLKQQIENER (76 aa).

Its subcellular location is the membrane. Its function is as follows. The phosphoenolpyruvate-dependent sugar phosphotransferase system (PTS), a major carbohydrate active -transport system, catalyzes the phosphorylation of incoming sugar substrates concomitant with their translocation across the cell membrane. This chain is Putative phosphotransferase enzyme IIB component MPN_268, found in Mycoplasma pneumoniae (strain ATCC 29342 / M129 / Subtype 1) (Mycoplasmoides pneumoniae).